A 141-amino-acid polypeptide reads, in one-letter code: uncharacterized protein (141 aa).

The 136-residue stretch at 4 to 139 (RTQMMYDMET…LIELFSKLDK (136 aa)) folds into the HTH marR-type domain. Residues 53 to 76 (VTEFAPILEVSASHITAVTDALVE) constitute a DNA-binding region (H-T-H motif).

This is an uncharacterized protein from Bacillus subtilis (strain 168).